Consider the following 185-residue polypeptide: Small ribosomal subunit protein uS4c (185 aa).

The S4 RNA-binding domain occupies 72-134 (MRLDNVIFRL…PTSCNALKGE (63 aa)). The tract at residues 132 to 154 (KGESPGGGETPDHLTASLSEGSR) is disordered.

This sequence belongs to the universal ribosomal protein uS4 family. As to quaternary structure, part of the 30S ribosomal subunit. Contacts protein S5. The interaction surface between S4 and S5 is involved in control of translational fidelity.

The protein localises to the plastid. It localises to the chloroplast. In terms of biological role, one of the primary rRNA binding proteins, it binds directly to 16S rRNA where it nucleates assembly of the body of the 30S subunit. Functionally, with S5 and S12 plays an important role in translational accuracy. The protein is Small ribosomal subunit protein uS4c (rps4) of Woodwardia radicans (Rooting chainfern).